The sequence spans 181 residues: RNA pyrophosphohydrolase (181 aa).

The 145-residue stretch at 6 to 150 (GYRPNVGIII…KCEVYRCALK (145 aa)) folds into the Nudix hydrolase domain. The Nudix box signature appears at 38–59 (GGIKEGETPEQAMYRELYEEVG).

Belongs to the Nudix hydrolase family. RppH subfamily. The cofactor is a divalent metal cation.

Accelerates the degradation of transcripts by removing pyrophosphate from the 5'-end of triphosphorylated RNA, leading to a more labile monophosphorylated state that can stimulate subsequent ribonuclease cleavage. The polypeptide is RNA pyrophosphohydrolase (Psychromonas ingrahamii (strain DSM 17664 / CCUG 51855 / 37)).